The primary structure comprises 256 residues: 5-oxoprolinase subunit A (256 aa).

Belongs to the LamB/PxpA family. As to quaternary structure, forms a complex composed of PxpA, PxpB and PxpC.

It carries out the reaction 5-oxo-L-proline + ATP + 2 H2O = L-glutamate + ADP + phosphate + H(+). Its function is as follows. Catalyzes the cleavage of 5-oxoproline to form L-glutamate coupled to the hydrolysis of ATP to ADP and inorganic phosphate. The protein is 5-oxoprolinase subunit A of Geobacillus thermodenitrificans (strain NG80-2).